Here is a 265-residue protein sequence, read N- to C-terminus: Putative cysteine-rich receptor-like protein kinase At4g11521 (265 aa).

Positions 1–23 are cleaved as a signal peptide; sequence MMLNTLFLPIFLFFLITFDYVST. 2 Gnk2-homologous domains span residues 24-122 and 128-241; these read QTCF…NISF and MEPS…LYPF. 3 N-linked (GlcNAc...) asparagine glycosylation sites follow: asparagine 34, asparagine 102, and asparagine 119. Asparagine 247 carries an N-linked (GlcNAc...) asparagine glycan.

Belongs to the protein kinase superfamily. Ser/Thr protein kinase family. CRK subfamily.

Its subcellular location is the secreted. This chain is Putative cysteine-rich receptor-like protein kinase At4g11521, found in Arabidopsis thaliana (Mouse-ear cress).